A 462-amino-acid chain; its full sequence is Sugar transporter ERD6-like 12 (462 aa).

Helical transmembrane passes span 25-45 (LLIFSTFIIVSASFTFGAAIG), 62-82 (LAQFSLFGSLSTFGGMIGAIF), 101-121 (LFCITGWLAISLAKDIIWLDM), 124-144 (FLVGIGVGLISYVVPVYIAEI), 151-171 (GAFTFSNQLLQNCGVAVVYYF), 179-199 (TLAIIGSIPCWIQVIGLFFIP), 262-282 (LTIGIGLMLLQQLCGTAGISS), 297-317 (IGMMVLSLIVVPKSLMGLILV), 326-346 (LMTSALGLCLSCITLAVAFGV), 358-378 (IFCFIGILSFTMMFAIGMGAL), 399-419 (VTIANWFTGWIANYAFNFMLV), and 424-444 (GTFIISAIICGATIVFTWCLV).

It belongs to the major facilitator superfamily. Sugar transporter (TC 2.A.1.1) family.

The protein localises to the membrane. Its function is as follows. Sugar transporter. In Arabidopsis thaliana (Mouse-ear cress), this protein is Sugar transporter ERD6-like 12 (SUGTL5).